The chain runs to 145 residues: MVKSVADRFFLGLDFGSTRIGVARNCGSLAVPVGVLPRASCAEILGYISRYSIDEVVIGLPLTLAGKEKQSARLAKEFSRFLVSSGVQVRFFDERFTTVIATQKFYSLGKGVKQIRKCVDAAAATVMLQLFLDMEVKVDPLERKP.

Belongs to the YqgF nuclease family.

Its subcellular location is the cytoplasm. In terms of biological role, could be a nuclease involved in processing of the 5'-end of pre-16S rRNA. In Tropheryma whipplei (strain Twist) (Whipple's bacillus), this protein is Putative pre-16S rRNA nuclease.